Consider the following 522-residue polypeptide: tRNA-2-methylthio-N(6)-dimethylallyladenosine synthase (522 aa).

The segment covering 1 to 26 (MSLTIPSPASGTSTSATTDTAPAAAP) has biased composition (low complexity). Residues 1–27 (MSLTIPSPASGTSTSATTDTAPAAAPQ) form a disordered region. The MTTase N-terminal domain occupies 28-143 (RTYQVRTFGC…LPALLDRARH (116 aa)). Cys37, Cys72, Cys106, Cys180, Cys184, and Cys187 together coordinate [4Fe-4S] cluster. One can recognise a Radical SAM core domain in the interval 166–396 (RDSVYSGWVS…TALQDRIAAE (231 aa)). The TRAM domain occupies 399 to 469 (ARQLGRRVEV…AFHLVADPAS (71 aa)). Positions 481–522 (GDAWDRSQADSCGAPVAGGGAGSNGGKGGVSLGMPALPVRRS) are disordered. The segment covering 496 to 511 (VAGGGAGSNGGKGGVS) has biased composition (gly residues).

It belongs to the methylthiotransferase family. MiaB subfamily. In terms of assembly, monomer. It depends on [4Fe-4S] cluster as a cofactor.

It localises to the cytoplasm. It catalyses the reaction N(6)-dimethylallyladenosine(37) in tRNA + (sulfur carrier)-SH + AH2 + 2 S-adenosyl-L-methionine = 2-methylsulfanyl-N(6)-dimethylallyladenosine(37) in tRNA + (sulfur carrier)-H + 5'-deoxyadenosine + L-methionine + A + S-adenosyl-L-homocysteine + 2 H(+). Functionally, catalyzes the methylthiolation of N6-(dimethylallyl)adenosine (i(6)A), leading to the formation of 2-methylthio-N6-(dimethylallyl)adenosine (ms(2)i(6)A) at position 37 in tRNAs that read codons beginning with uridine. This Arthrobacter sp. (strain FB24) protein is tRNA-2-methylthio-N(6)-dimethylallyladenosine synthase.